The sequence spans 312 residues: 6-hydroxy-3-succinoylpyridine 3-monooxygenase HspA (312 aa).

The NYN domain occupies 14–210 (IYIDGYNFYY…RSANTDLIKF (197 aa)).

It catalyses the reaction 4-(6-hydroxypyridin-3-yl)-4-oxobutanoate + 2 NADH + O2 + 2 H(+) = 2,5-dihydroxypyridine + succinate semialdehyde + 2 NAD(+) + H2O. The protein operates within alkaloid degradation; nicotine degradation. In terms of biological role, involved in the nicotine degradation. Catalyzes the cleavage of 6-hydroxy-3-succinoylpyridine (HSP) by incorporation of oxygen at the 3-position to produce to 2,5-dihydroxypyridine (DHP) and succinic semialdehyde. This Pseudomonas putida (strain DSM 28022 / S16) protein is 6-hydroxy-3-succinoylpyridine 3-monooxygenase HspA.